Here is a 317-residue protein sequence, read N- to C-terminus: MKGLKNQIMKKTSLFICTLLFILSIVFYPKITFAYPFWAQQNYESPREATGKIVCANCHLAQMPTIAEVPQSVGADSVFKAVVKIPYKNDLKEIGADGSEVPLQVGAVVMLPDGFKLAPQERWTEEIKEETEGVYFTNYSEEKENIIIVGPLPGDTNKEIVFPVLSPDPSTNKEYHYGKYSLHIGGNRGRGQVYPTGDKSNNVVFTSSTSGTIDSIDIIEDGSYKVNIENDNGEITTEEVPVGPQLIVKAQDKINAGDPLTNDPNVGGFGQLDAEVVLQSPYRVIGLIAFFIGVGLTQILLVLKKKQVEKVQAAEGI.

The signal sequence occupies residues 1-34; it reads MKGLKNQIMKKTSLFICTLLFILSIVFYPKITFA. Tyrosine 35, cysteine 55, cysteine 58, and histidine 59 together coordinate heme. A helical transmembrane segment spans residues 284–304; that stretch reads VIGLIAFFIGVGLTQILLVLK.

The protein belongs to the cytochrome f family. The 4 large subunits of the cytochrome b6-f complex are cytochrome b6, subunit IV (17 kDa polypeptide, PetD), cytochrome f and the Rieske protein, while the 4 small subunits are PetG, PetL, PetM and PetN. The complex functions as a dimer. Requires heme as cofactor.

It localises to the cellular thylakoid membrane. Its function is as follows. Component of the cytochrome b6-f complex, which mediates electron transfer between photosystem II (PSII) and photosystem I (PSI), cyclic electron flow around PSI, and state transitions. The chain is Cytochrome f from Prochlorococcus marinus (strain MIT 9215).